The following is a 395-amino-acid chain: MKRLFTSESVTEGHPDKVADQISDAILDAMLEQDPKSRVAVETLVTTGIAIVSGEVTTRAYVDIQDIVRKTILDIGYTRAKYGFDGETCAVLSSIHSQSPDIALGVDKALEAKEGELIAEDELEQVGAGDQGMMFGYATNETKEYMPLPIMLSHKLAMKLSEVRKNGTLPFLRPDGKTQVTIEYDENDKPVRVDTVLISTQHEPDVTISEIKEALIKHVIDPIIPEELRDDKMKILVNPTGRFVLGGPSADTGLTGRKIIVDTYGGAVPHGGGAFSGKDPTKVDRSAHYFARYVAKNVVAAGLADKFMIQVAYAIGKAQPVSVMINTFGTAKTDEDKILKAILEIFDFRPGAIIKKLDLLRPIYKKTAAYGHFGRELEEFTWEKLDMVNELKKIL.

Histidine 14 provides a ligand contact to ATP. Residue aspartate 16 participates in Mg(2+) binding. Residue glutamate 42 coordinates K(+). Positions 55 and 98 each coordinate L-methionine. The flexible loop stretch occupies residues 98–108 (QSPDIALGVDK). ATP is bound by residues 175–177 (DGK), 242–243 (RF), aspartate 251, 257–258 (RK), alanine 274, and lysine 278. Aspartate 251 lines the L-methionine pocket. Residue lysine 282 coordinates L-methionine.

Belongs to the AdoMet synthase family. As to quaternary structure, homotetramer; dimer of dimers. Requires Mg(2+) as cofactor. It depends on K(+) as a cofactor.

It is found in the cytoplasm. The catalysed reaction is L-methionine + ATP + H2O = S-adenosyl-L-methionine + phosphate + diphosphate. It participates in amino-acid biosynthesis; S-adenosyl-L-methionine biosynthesis; S-adenosyl-L-methionine from L-methionine: step 1/1. Catalyzes the formation of S-adenosylmethionine (AdoMet) from methionine and ATP. The overall synthetic reaction is composed of two sequential steps, AdoMet formation and the subsequent tripolyphosphate hydrolysis which occurs prior to release of AdoMet from the enzyme. The sequence is that of S-adenosylmethionine synthase from Thermosipho africanus (strain TCF52B).